Consider the following 432-residue polypeptide: Adenosylmethionine-8-amino-7-oxononanoate aminotransferase (432 aa).

Trp-52 serves as a coordination point for substrate. Pyridoxal 5'-phosphate is bound at residue 112 to 113 (GS). Tyr-144 is a binding site for substrate. Asp-245 serves as a coordination point for pyridoxal 5'-phosphate. 2 residues coordinate substrate: Lys-274 and Gly-307. An N6-(pyridoxal phosphate)lysine modification is found at Lys-274. Residue 308–309 (PT) coordinates pyridoxal 5'-phosphate. Arg-391 is a binding site for substrate.

This sequence belongs to the class-III pyridoxal-phosphate-dependent aminotransferase family. BioA subfamily. As to quaternary structure, homodimer. The cofactor is pyridoxal 5'-phosphate.

It localises to the cytoplasm. It catalyses the reaction (8S)-8-amino-7-oxononanoate + S-adenosyl-L-methionine = S-adenosyl-4-methylsulfanyl-2-oxobutanoate + (7R,8S)-7,8-diammoniononanoate. It functions in the pathway cofactor biosynthesis; biotin biosynthesis; 7,8-diaminononanoate from 8-amino-7-oxononanoate (SAM route): step 1/1. Catalyzes the transfer of the alpha-amino group from S-adenosyl-L-methionine (SAM) to 7-keto-8-aminopelargonic acid (KAPA) to form 7,8-diaminopelargonic acid (DAPA). It is the only aminotransferase known to utilize SAM as an amino donor. In Buchnera aphidicola subsp. Schizaphis graminum (strain Sg), this protein is Adenosylmethionine-8-amino-7-oxononanoate aminotransferase.